The primary structure comprises 273 residues: Putative pyruvate, phosphate dikinase regulatory protein (273 aa).

ADP is bound at residue 149-156 (GPSRTSKT).

Belongs to the pyruvate, phosphate/water dikinase regulatory protein family. PDRP subfamily.

It catalyses the reaction N(tele)-phospho-L-histidyl/L-threonyl-[pyruvate, phosphate dikinase] + ADP = N(tele)-phospho-L-histidyl/O-phospho-L-threonyl-[pyruvate, phosphate dikinase] + AMP + H(+). The enzyme catalyses N(tele)-phospho-L-histidyl/O-phospho-L-threonyl-[pyruvate, phosphate dikinase] + phosphate + H(+) = N(tele)-phospho-L-histidyl/L-threonyl-[pyruvate, phosphate dikinase] + diphosphate. Its function is as follows. Bifunctional serine/threonine kinase and phosphorylase involved in the regulation of the pyruvate, phosphate dikinase (PPDK) by catalyzing its phosphorylation/dephosphorylation. In Rickettsia bellii (strain OSU 85-389), this protein is Putative pyruvate, phosphate dikinase regulatory protein.